A 218-amino-acid chain; its full sequence is Thiopurine S-methyltransferase (218 aa).

Residues Trp-10, Leu-45, Glu-66, and Arg-123 each coordinate S-adenosyl-L-methionine.

Belongs to the class I-like SAM-binding methyltransferase superfamily. TPMT family.

Its subcellular location is the cytoplasm. It carries out the reaction S-adenosyl-L-methionine + a thiopurine = S-adenosyl-L-homocysteine + a thiopurine S-methylether.. The protein is Thiopurine S-methyltransferase of Shewanella baltica (strain OS185).